We begin with the raw amino-acid sequence, 362 residues long: Anthranilate phosphoribosyltransferase 2 (362 aa).

5-phospho-alpha-D-ribose 1-diphosphate contacts are provided by residues G103, 106–107, T111, 113–116, 131–139, and S143; these read GD, NIST, and KHGNRSASS. G103 is a binding site for anthranilate. S115 contributes to the Mg(2+) binding site. N134 lines the anthranilate pocket. R189 is an anthranilate binding site. Positions 248 and 249 each coordinate Mg(2+).

It belongs to the anthranilate phosphoribosyltransferase family. As to quaternary structure, homodimer. The cofactor is Mg(2+).

The catalysed reaction is N-(5-phospho-beta-D-ribosyl)anthranilate + diphosphate = 5-phospho-alpha-D-ribose 1-diphosphate + anthranilate. It functions in the pathway amino-acid biosynthesis; L-tryptophan biosynthesis; L-tryptophan from chorismate: step 2/5. In terms of biological role, catalyzes the transfer of the phosphoribosyl group of 5-phosphorylribose-1-pyrophosphate (PRPP) to anthranilate to yield N-(5'-phosphoribosyl)-anthranilate (PRA). The protein is Anthranilate phosphoribosyltransferase 2 of Nostoc sp. (strain PCC 7120 / SAG 25.82 / UTEX 2576).